The chain runs to 92 residues: MLKAIRRFFGEKASGQVARRRMQVVLMHDRMDLTPDIMEALRNDILAVISRYMEIDSRSIRVDLEQGKEYMALVSNIQIKRVYRKAAPDIRS.

This sequence belongs to the MinE family.

Functionally, prevents the cell division inhibition by proteins MinC and MinD at internal division sites while permitting inhibition at polar sites. This ensures cell division at the proper site by restricting the formation of a division septum at the midpoint of the long axis of the cell. This Syntrophobacter fumaroxidans (strain DSM 10017 / MPOB) protein is Cell division topological specificity factor.